The primary structure comprises 875 residues: Protein SEY1 (875 aa).

Residues 1-749 (MVANGHFASN…KRSAIGGITQ (749 aa)) are Cytoplasmic-facing. One can recognise a GB1/RHD3-type G domain in the interval 49–307 (GFNYHLISVF…IPADGFAVYA (259 aa)). 59–66 (GSQSTGKS) contributes to the GTP binding site. A coiled-coil region spans residues 482 to 506 (SNYQQELSLYQKDLERISGQLRRDE). A disordered region spans residues 676–704 (LDKWIGHTPSSATPADEEDLTPIGGVDED). Over residues 690-704 (ADEEDLTPIGGVDED) the composition is skewed to acidic residues. The chain crosses the membrane as a helical span at residues 750–770 (VPLYFYGLLLALGWNEIMAVL). Topologically, residues 771-773 (RNP) are lumenal. The chain crosses the membrane as a helical span at residues 774–794 (AYFFLLFVCAIGAYVTYQLNL). Residues 795-875 (WGPIIKMTEA…ADDDDVDDDF (81 aa)) lie on the Cytoplasmic side of the membrane. Residues 831–875 (MAMSGARNATEEHEMSNLNRKSGERGGQKYRGEDVADDDDVDDDF) form a disordered region. Over residues 839–864 (ATEEHEMSNLNRKSGERGGQKYRGED) the composition is skewed to basic and acidic residues. Acidic residues predominate over residues 865–875 (VADDDDVDDDF).

This sequence belongs to the TRAFAC class dynamin-like GTPase superfamily. GB1/RHD3 GTPase family. RHD3 subfamily.

It is found in the endoplasmic reticulum membrane. In terms of biological role, cooperates with the reticulon proteins and tubule-shaping DP1 family proteins to generate and maintain the structure of the tubular endoplasmic reticulum network. Has GTPase activity, which is required for its function in ER organization. In Ajellomyces dermatitidis (strain ER-3 / ATCC MYA-2586) (Blastomyces dermatitidis), this protein is Protein SEY1.